The primary structure comprises 186 residues: Threonylcarbamoyl-AMP synthase (186 aa).

Positions 3 to 186 (ELTLDSAVAT…DALSGNVLRS (184 aa)) constitute a YrdC-like domain.

The protein belongs to the SUA5 family. TsaC subfamily.

The protein localises to the cytoplasm. The enzyme catalyses L-threonine + hydrogencarbonate + ATP = L-threonylcarbamoyladenylate + diphosphate + H2O. Required for the formation of a threonylcarbamoyl group on adenosine at position 37 (t(6)A37) in tRNAs that read codons beginning with adenine. Catalyzes the conversion of L-threonine, HCO(3)(-)/CO(2) and ATP to give threonylcarbamoyl-AMP (TC-AMP) as the acyladenylate intermediate, with the release of diphosphate. The chain is Threonylcarbamoyl-AMP synthase from Stenotrophomonas maltophilia (strain K279a).